The primary structure comprises 452 residues: uncharacterized protein (452 aa).

The protein belongs to the HypE family.

This is an uncharacterized protein from Methanocaldococcus jannaschii (strain ATCC 43067 / DSM 2661 / JAL-1 / JCM 10045 / NBRC 100440) (Methanococcus jannaschii).